The primary structure comprises 230 residues: Large ribosomal subunit protein uL1c (230 aa).

Belongs to the universal ribosomal protein uL1 family. As to quaternary structure, part of the 50S ribosomal subunit.

The protein localises to the plastid. Its subcellular location is the chloroplast. Its function is as follows. Binds directly to 23S rRNA. Might be involved in E site tRNA release (Potential). The sequence is that of Large ribosomal subunit protein uL1c (rpl1) from Thalassiosira pseudonana (Marine diatom).